The sequence spans 430 residues: Nacrein-like protein P2 (430 aa).

The N-linked (GlcNAc...) asparagine glycan is linked to Asn-27. Residues 33-429 (AGFSYDRSIC…KNKVTVYKSF (397 aa)) form the Alpha-carbonic anhydrase domain. 3 residues coordinate Zn(2+): His-132, His-134, and His-157. Positions 201 to 312 (DEPDDEECKR…GENGHKHGCR (112 aa)) are disordered. Over residues 207–219 (ECKRILKGHHPDN) the composition is skewed to basic and acidic residues. The span at 220 to 304 (NENGNGDNGN…NNGENGNNGE (85 aa)) shows a compositional bias: low complexity. Repeat copies occupy residues 225 to 227 (GDN), 228 to 230 (GNN), 231 to 233 (GYN), 234 to 236 (GDN), 237 to 239 (GNN), 240 to 242 (GDN), 243 to 245 (GNN), 246 to 248 (GYN), 249 to 251 (GDN), 252 to 254 (GNN), 255 to 257 (GVN), 258 to 260 (GNN), 261 to 263 (GYN), 264 to 266 (GDN), 267 to 269 (GNN), 270 to 272 (GDN), 273 to 275 (GNN), 276 to 278 (GYN), 279 to 281 (GDN), 282 to 284 (GNN), 285 to 287 (GDN), 288 to 290 (GNN), 291 to 293 (GEN), 294 to 296 (GNN), 297 to 299 (GEN), 300 to 301 (GN), and 303 to 305 (GEN). The 27 X 3 AA approximate tandem repeats of G-X-N stretch occupies residues 225–305 (GDNGNNGYNG…NGENGNNGEN (81 aa)). 370-371 (TT) is a substrate binding site.

This sequence belongs to the alpha-carbonic anhydrase family. In terms of assembly, homooligomer; disulfide-linked. May also be disulfide-linked to insoluble organic matrix. Zn(2+) serves as cofactor. Expressed in the mantle.

It is found in the secreted. Its subcellular location is the extracellular space. The protein resides in the extracellular matrix. It carries out the reaction hydrogencarbonate + H(+) = CO2 + H2O. Its function is as follows. Acts as a negative regulator for calcification in the shells of mollusks. May function both as a calcium concentrator and as a carbonic anhydrase required for production of carbonate ions, which are assembled to CaCO(3) at mineralization sites. Is important for shell formation in both the calcitic prismatic layer and the aragonitic nacreous layer. Shows inhibitory activity of crystal formation when present in free state but, when attached to the insoluble matrix, may regulate the form and size of aragonite crystal. This Mizuhopecten yessoensis (Japanese scallop) protein is Nacrein-like protein P2.